Here is a 282-residue protein sequence, read N- to C-terminus: 2-dehydro-3-deoxyphosphooctonate aldolase (282 aa).

This sequence belongs to the KdsA family.

It localises to the cytoplasm. It catalyses the reaction D-arabinose 5-phosphate + phosphoenolpyruvate + H2O = 3-deoxy-alpha-D-manno-2-octulosonate-8-phosphate + phosphate. Its pathway is carbohydrate biosynthesis; 3-deoxy-D-manno-octulosonate biosynthesis; 3-deoxy-D-manno-octulosonate from D-ribulose 5-phosphate: step 2/3. It functions in the pathway bacterial outer membrane biogenesis; lipopolysaccharide biosynthesis. The chain is 2-dehydro-3-deoxyphosphooctonate aldolase from Granulibacter bethesdensis (strain ATCC BAA-1260 / CGDNIH1).